A 106-amino-acid chain; its full sequence is UPF0145 protein Tpet_0165 (106 aa).

This sequence belongs to the UPF0145 family.

This chain is UPF0145 protein Tpet_0165, found in Thermotoga petrophila (strain ATCC BAA-488 / DSM 13995 / JCM 10881 / RKU-1).